A 406-amino-acid polypeptide reads, in one-letter code: MTSSMFRSPCKIPSVKGFEQKSYVGLKAASYNVRVNSFKSSEVASQLQKIDSTLIWPVNALEAPPVPSKPATPLIDQPLQLSRRARRNRKCPTQRAAFQETNISPANFIYPLFIHEGEVDIPITSMPGRYMLGWRHGLIEEVARALDVGVNSVKLYPKVPEALKSPTGEEAFNDNGLIPRTVRLLKDRFPDLVIYTDVNFDEYSTTGHGGIVGEDGVILNDETIHQLRKQAVSQARAGADVVCTSEMLDGRVGAVRAALDAEGFQDVSIMSYSVKYTSSLYGRFRKVQLDKKTYQINPANSREALLEAREDEAEGADILMVKPALPSLDIIRLLKNQTLLPIGACQVSGEYSMIKAAGLLKMIDEEKVMMESLLCIRRAGADLILTYFALQAATKLCGENKRFSSN.

Residues 1-34 (MTSSMFRSPCKIPSVKGFEQKSYVGLKAASYNVR) constitute a chloroplast transit peptide. Lys-275 (schiff-base intermediate with substrate) is an active-site residue. Positions 285 and 291 each coordinate 5-aminolevulinate. Glu-307 contributes to the Mg(2+) binding site. Lys-322 acts as the Schiff-base intermediate with substrate in catalysis. 5-aminolevulinate-binding residues include Ser-348 and Tyr-387.

The protein belongs to the ALAD family. Homooctamer. Requires Mg(2+) as cofactor.

It localises to the plastid. The protein resides in the chloroplast. The catalysed reaction is 2 5-aminolevulinate = porphobilinogen + 2 H2O + H(+). Its pathway is porphyrin-containing compound metabolism; protoporphyrin-IX biosynthesis; coproporphyrinogen-III from 5-aminolevulinate: step 1/4. It participates in porphyrin-containing compound metabolism; chlorophyll biosynthesis. Catalyzes an early step in the biosynthesis of tetrapyrroles. Binds two molecules of 5-aminolevulinate per subunit, each at a distinct site, and catalyzes their condensation to form porphobilinogen. The protein is Probable delta-aminolevulinic acid dehydratase 2, chloroplastic (HEMB2) of Arabidopsis thaliana (Mouse-ear cress).